The following is a 287-amino-acid chain: Nematocyst expressed protein 6 (287 aa).

The signal sequence occupies residues Met-1–Gly-20. A Peptidase M12A domain is found at Arg-53–Asn-249. Disulfide bonds link Cys-95–Cys-248 and Cys-116–Cys-139. A Zn(2+)-binding site is contributed by His-146. Residue Glu-147 is part of the active site. Zn(2+) contacts are provided by His-150 and His-156. The interval Asn-249–Glu-287 is disordered. Positions Gly-268–Glu-287 are enriched in basic and acidic residues.

Zn(2+) is required as a cofactor. In terms of tissue distribution, nematocyte and pharyngeal gland.

The protein resides in the secreted. It localises to the nematocyst. In terms of biological role, metalloprotease. The chain is Nematocyst expressed protein 6 from Nematostella vectensis (Starlet sea anemone).